The primary structure comprises 409 residues: Growth-regulating factor 8 (409 aa).

2 stretches are compositionally biased toward gly residues: residues 1 to 10 and 27 to 36; these read MLSSCGGHGH and QQGGGGGGGQ. The tract at residues 1 to 81 is disordered; the sequence is MLSSCGGHGH…GGGGQMLSFS (81 aa). A compositionally biased stretch (low complexity) spans 56–68; it reads SSSSFLGSTSSSC. The 36-residue stretch at 107–142 folds into the QLQ domain; the sequence is PFTPTQWMELEHQALIYKHIAANVSVPSSLLLPIRR. In terms of domain architecture, WRC spans 158–202; that stretch reads DVEPRRCRRTDGKKWRCSRDAVGDQKYCERHINRGRHRSRKHVEG. 2 short sequence motifs (bipartite nuclear localization signal) span residues 163–173 and 191–198; these read RCRRTDGKKWR and RGRHRSRK. A disordered region spans residues 221 to 242; the sequence is SSRGHTVARQKQVKGSAATVSD.

The protein belongs to the GRF family.

It localises to the nucleus. Functionally, transcription activator that plays a regulatory role in gibberellin-induced stem elongation. The sequence is that of Growth-regulating factor 8 (GRF8) from Oryza sativa subsp. japonica (Rice).